The sequence spans 176 residues: Probable non-specific lipid-transfer protein 1 (176 aa).

The first 37 residues, 1–37 (MRTVSAPSAVALVVIVAAGLAWTSLASVAPPAPAPGS), serve as a signal peptide directing secretion. Cystine bridges form between Cys-41–Cys-89, Cys-51–Cys-66, Cys-67–Cys-112, and Cys-87–Cys-128. The interval 139-176 (QLPVSLRHGPVTGPSDPAHKARLERPQIRVPPPAPEKA) is disordered. The segment covering 155-165 (PAHKARLERPQ) has biased composition (basic and acidic residues). Over residues 167–176 (RVPPPAPEKA) the composition is skewed to pro residues.

Belongs to the plant LTP family.

Its function is as follows. Plant non-specific lipid-transfer proteins transfer phospholipids as well as galactolipids across membranes. May play a role in wax or cutin deposition in the cell walls of expanding epidermal cells and certain secretory tissues. This Parietaria judaica (Pellitory-of-the-wall) protein is Probable non-specific lipid-transfer protein 1.